Consider the following 211-residue polypeptide: Nucleoside triphosphate pyrophosphatase (211 aa).

Residue Asp-75 is the Proton acceptor of the active site.

Belongs to the Maf family. A divalent metal cation is required as a cofactor.

Its subcellular location is the cytoplasm. The catalysed reaction is a ribonucleoside 5'-triphosphate + H2O = a ribonucleoside 5'-phosphate + diphosphate + H(+). The enzyme catalyses a 2'-deoxyribonucleoside 5'-triphosphate + H2O = a 2'-deoxyribonucleoside 5'-phosphate + diphosphate + H(+). In terms of biological role, nucleoside triphosphate pyrophosphatase. May have a dual role in cell division arrest and in preventing the incorporation of modified nucleotides into cellular nucleic acids. The chain is Nucleoside triphosphate pyrophosphatase from Prochlorococcus marinus (strain NATL1A).